A 790-amino-acid chain; its full sequence is Cadherin-20 (790 aa).

The N-terminal stretch at 1–25 (MSCKRSYHRHCALVYYMVLLDLTNA) is a signal peptide. The propeptide occupies 26–52 (VFEFSHPLIRDSGNSQSRQLLHHRLKR). Residues 26–612 (VFEFSHPLIR…PYTLPISLSR (587 aa)) are Extracellular-facing. Cadherin domains lie at 54-158 (WVWN…EPKF), 159-267 (LDGP…PPRF), 268-382 (PQKH…PPVF), 383-487 (GSSF…APTF), and 487-605 (FTKF…EPYT). Asn-254, Asn-283, Asn-413, Asn-454, and Asn-535 each carry an N-linked (GlcNAc...) asparagine glycan. Residues 613-633 (GALIAILTCIFVLLVLVLLIL) form a helical membrane-spanning segment. The Cytoplasmic segment spans residues 634 to 790 (SMRRHRKQPY…YGTKDNNGSL (157 aa)).

Detected in embryonic posterior neural plate, embryonic neural tube, sulcus limitans and embryonic kidney.

It localises to the cell membrane. In terms of biological role, cadherins are calcium-dependent cell adhesion proteins. They preferentially interact with themselves in a homophilic manner in connecting cells; cadherins may thus contribute to the sorting of heterogeneous cell types. The chain is Cadherin-20 (cdh20) from Xenopus laevis (African clawed frog).